The chain runs to 169 residues: S-ribosylhomocysteine lyase (169 aa).

Residues His54, His58, and Cys128 each coordinate Fe cation.

It belongs to the LuxS family. As to quaternary structure, homodimer. The cofactor is Fe cation.

It carries out the reaction S-(5-deoxy-D-ribos-5-yl)-L-homocysteine = (S)-4,5-dihydroxypentane-2,3-dione + L-homocysteine. Involved in the synthesis of autoinducer 2 (AI-2) which is secreted by bacteria and is used to communicate both the cell density and the metabolic potential of the environment. The regulation of gene expression in response to changes in cell density is called quorum sensing. Catalyzes the transformation of S-ribosylhomocysteine (RHC) to homocysteine (HC) and 4,5-dihydroxy-2,3-pentadione (DPD). The chain is S-ribosylhomocysteine lyase from Shewanella putrefaciens (strain CN-32 / ATCC BAA-453).